The sequence spans 233 residues: Urease accessory protein UreF (233 aa).

This sequence belongs to the UreF family. In terms of assembly, ureD, UreF and UreG form a complex that acts as a GTP-hydrolysis-dependent molecular chaperone, activating the urease apoprotein by helping to assemble the nickel containing metallocenter of UreC. The UreE protein probably delivers the nickel.

Its subcellular location is the cytoplasm. Functionally, required for maturation of urease via the functional incorporation of the urease nickel metallocenter. The protein is Urease accessory protein UreF of Polaromonas sp. (strain JS666 / ATCC BAA-500).